The primary structure comprises 454 residues: MSENHSEGASRPVISRRPAAGLRADHPVHVPGDKSISHRALMIGALAVGETRISGLLEGEDVLRTAAAMRALGAEVVRDAPGSWRVAGRGIGGLTEPADVLDMGNSGTAARLLTGVLASHDLFAVMTGDASLRKRPMRRVTDPLAACGAGFHTRSGGRLPMAVRGTGEALPLHYRLPVASAQVKSAILLAGLNARGETVVEEPHATRDHSENMLRHFGATVQVEPTGDGAGRIVRLQGQPELRAADIVVPADPSSAAFPLVAALLVPGSEITLAGVGLNPLRTGLFDTLVEMGAALTIANRRIEGGEPVGDITVRASTLHGVEVPPERAPSMIDEFPILSVAAAVASGTTRMRGLAELRVKESDRLAATAALLSVNGVQVEIEGDDLIVIGCGGPPPGGGLVTTYMDHRLAMSALVLGLTTQAPVTADDAAFIDTSFPGFATLMTGLGADFSCA.

Residues 1 to 31 (MSENHSEGASRPVISRRPAAGLRADHPVHVP) are disordered. Positions 34, 35, and 39 each coordinate 3-phosphoshikimate. Lys-34 is a phosphoenolpyruvate binding site. Phosphoenolpyruvate contacts are provided by Gly-107 and Arg-135. Residues Ser-180, Gln-182, Asp-334, and Lys-361 each coordinate 3-phosphoshikimate. Phosphoenolpyruvate is bound at residue Gln-182. Asp-334 functions as the Proton acceptor in the catalytic mechanism. Arg-365 and Arg-409 together coordinate phosphoenolpyruvate.

Belongs to the EPSP synthase family. Monomer.

The protein resides in the cytoplasm. It catalyses the reaction 3-phosphoshikimate + phosphoenolpyruvate = 5-O-(1-carboxyvinyl)-3-phosphoshikimate + phosphate. The protein operates within metabolic intermediate biosynthesis; chorismate biosynthesis; chorismate from D-erythrose 4-phosphate and phosphoenolpyruvate: step 6/7. Functionally, catalyzes the transfer of the enolpyruvyl moiety of phosphoenolpyruvate (PEP) to the 5-hydroxyl of shikimate-3-phosphate (S3P) to produce enolpyruvyl shikimate-3-phosphate and inorganic phosphate. This is 3-phosphoshikimate 1-carboxyvinyltransferase from Granulibacter bethesdensis (strain ATCC BAA-1260 / CGDNIH1).